We begin with the raw amino-acid sequence, 122 residues long: Large ribosomal subunit protein uL14c (122 aa).

It belongs to the universal ribosomal protein uL14 family. In terms of assembly, part of the 50S ribosomal subunit.

The protein localises to the plastid. It localises to the chloroplast. Its function is as follows. Binds to 23S rRNA. This is Large ribosomal subunit protein uL14c from Pleurastrum terricola (Filamentous green alga).